Consider the following 607-residue polypeptide: Guanine nucleotide-binding protein-like 1 (607 aa).

Basic residues predominate over residues 1–14; the sequence is MPRKKPFSVKQKKK. The disordered stretch occupies residues 1 to 81; it reads MPRKKPFSVK…GPRGYDPNRY (81 aa). A compositionally biased stretch (basic and acidic residues) spans 15–26; that stretch reads QLQDKRERKRGL. Residues serine 32, serine 33, and serine 34 each carry the phosphoserine modification. A phosphothreonine mark is found at threonine 48 and threonine 50. Residues serine 51 and serine 68 each carry the phosphoserine modification. One can recognise a CP-type G domain in the interval 178–418; sequence WRQLWRVLEM…LCDCPGLIFP (241 aa). Position 225 to 228 (225 to 228) interacts with GTP; sequence NKVD. The residue at position 324 (serine 324) is a Phosphoserine. GTP-binding positions include 367 to 374 and 411 to 415; these read GFPNVGKS and DCPGL. Residues 544-607 form a disordered region; that stretch reads GRVGPAGDEE…PYALLGEGEC (64 aa). The span at 550–585 shows a compositional bias: acidic residues; the sequence is GDEEEEEEEELSSSCEEEGEEDRDADEEGEGDEDTP. 3 positions are modified to phosphoserine: serine 561, serine 562, and serine 563.

Belongs to the TRAFAC class YlqF/YawG GTPase family.

Possible regulatory or functional link with the histocompatibility cluster. The protein is Guanine nucleotide-binding protein-like 1 (Gnl1) of Rattus norvegicus (Rat).